Reading from the N-terminus, the 200-residue chain is Large ribosomal subunit protein uL4 (200 aa).

Residues 38 to 72 (GRQGTKQQKTRSDVAGGGKRPWRQKGTGRARAGTT) form a disordered region.

It belongs to the universal ribosomal protein uL4 family. As to quaternary structure, part of the 50S ribosomal subunit.

One of the primary rRNA binding proteins, this protein initially binds near the 5'-end of the 23S rRNA. It is important during the early stages of 50S assembly. It makes multiple contacts with different domains of the 23S rRNA in the assembled 50S subunit and ribosome. In terms of biological role, forms part of the polypeptide exit tunnel. The chain is Large ribosomal subunit protein uL4 from Pseudomonas putida (strain ATCC 700007 / DSM 6899 / JCM 31910 / BCRC 17059 / LMG 24140 / F1).